The chain runs to 304 residues: Glycine--tRNA ligase alpha subunit (304 aa).

This sequence belongs to the class-II aminoacyl-tRNA synthetase family. Tetramer of two alpha and two beta subunits.

The protein resides in the cytoplasm. It carries out the reaction tRNA(Gly) + glycine + ATP = glycyl-tRNA(Gly) + AMP + diphosphate. This Pectobacterium atrosepticum (strain SCRI 1043 / ATCC BAA-672) (Erwinia carotovora subsp. atroseptica) protein is Glycine--tRNA ligase alpha subunit.